A 177-amino-acid polypeptide reads, in one-letter code: MSEFITVARPYAKAAFDFAVEHQSVERWQDMLAFAAEVTKNEQMAELLSGALAPETLAESFIAVCGEQLDENGQNLIRVMAENGRLNALPDVLEQFIHLRAVSEATAEVDVISAAALSEQQLAKISAAMEKRLSRKVKLNCKIDKSVMAGVIIRAGDMVIDGSVRGRLERLADVLQS.

It belongs to the ATPase delta chain family. As to quaternary structure, F-type ATPases have 2 components, F(1) - the catalytic core - and F(0) - the membrane proton channel. F(1) has five subunits: alpha(3), beta(3), gamma(1), delta(1), epsilon(1). F(0) has three main subunits: a(1), b(2) and c(10-14). The alpha and beta chains form an alternating ring which encloses part of the gamma chain. F(1) is attached to F(0) by a central stalk formed by the gamma and epsilon chains, while a peripheral stalk is formed by the delta and b chains.

It localises to the cell inner membrane. Functionally, f(1)F(0) ATP synthase produces ATP from ADP in the presence of a proton or sodium gradient. F-type ATPases consist of two structural domains, F(1) containing the extramembraneous catalytic core and F(0) containing the membrane proton channel, linked together by a central stalk and a peripheral stalk. During catalysis, ATP synthesis in the catalytic domain of F(1) is coupled via a rotary mechanism of the central stalk subunits to proton translocation. In terms of biological role, this protein is part of the stalk that links CF(0) to CF(1). It either transmits conformational changes from CF(0) to CF(1) or is implicated in proton conduction. In Shigella boydii serotype 18 (strain CDC 3083-94 / BS512), this protein is ATP synthase subunit delta.